The following is a 475-amino-acid chain: GlcNAc-binding protein A (475 aa).

A signal peptide spans 1–27 (MPKLTQLSLVTLALTAGSTLVSQTASA). The Chitin-binding type-4 domain occupies 28–195 (HGYVVSPESR…SFYNAIDVNF (168 aa)). The 43-residue stretch at 426–468 (AGTKVLQPKTGKVYQCKPWPYNGYCVQWSPTATGFEPGIGNSW) folds into the Chitin-binding type-3 domain.

This sequence belongs to the GbpA family.

Its subcellular location is the secreted. Functionally, probably interacts with GlcNAc residues. May promote attachment to both epithelial cell surfaces and chitin. This Shewanella oneidensis (strain ATCC 700550 / JCM 31522 / CIP 106686 / LMG 19005 / NCIMB 14063 / MR-1) protein is GlcNAc-binding protein A.